The chain runs to 41 residues: Large ribosomal subunit protein bL36 (41 aa).

The protein belongs to the bacterial ribosomal protein bL36 family.

The chain is Large ribosomal subunit protein bL36 from Edwardsiella ictaluri (strain 93-146).